Here is a 72-residue protein sequence, read N- to C-terminus: DNA-directed RNA polymerase subunit omega (72 aa).

The protein belongs to the RNA polymerase subunit omega family. As to quaternary structure, the RNAP catalytic core consists of 2 alpha, 1 beta, 1 beta' and 1 omega subunit. When a sigma factor is associated with the core the holoenzyme is formed, which can initiate transcription.

It carries out the reaction RNA(n) + a ribonucleoside 5'-triphosphate = RNA(n+1) + diphosphate. Promotes RNA polymerase assembly. Latches the N- and C-terminal regions of the beta' subunit thereby facilitating its interaction with the beta and alpha subunits. This is DNA-directed RNA polymerase subunit omega from Clostridium beijerinckii (strain ATCC 51743 / NCIMB 8052) (Clostridium acetobutylicum).